The sequence spans 134 residues: NADH-quinone oxidoreductase subunit A (134 aa).

3 helical membrane-spanning segments follow: residues 12-32 (FAIYVIGAIAICLTMIGLAAL), 64-84 (FYLVAMFFVIFDVEALYLFAW), and 93-113 (WVGFIEATIFIGLLLIGLVYL).

This sequence belongs to the complex I subunit 3 family. In terms of assembly, NDH-1 is composed of 13 different subunits. Subunits NuoA, H, J, K, L, M, N constitute the membrane sector of the complex.

The protein resides in the cell inner membrane. It catalyses the reaction a quinone + NADH + 5 H(+)(in) = a quinol + NAD(+) + 4 H(+)(out). Its function is as follows. NDH-1 shuttles electrons from NADH, via FMN and iron-sulfur (Fe-S) centers, to quinones in the respiratory chain. The immediate electron acceptor for the enzyme in this species is believed to be ubiquinone. Couples the redox reaction to proton translocation (for every two electrons transferred, four hydrogen ions are translocated across the cytoplasmic membrane), and thus conserves the redox energy in a proton gradient. In Shewanella oneidensis (strain ATCC 700550 / JCM 31522 / CIP 106686 / LMG 19005 / NCIMB 14063 / MR-1), this protein is NADH-quinone oxidoreductase subunit A.